Here is a 535-residue protein sequence, read N- to C-terminus: GMP synthase [glutamine-hydrolyzing] (535 aa).

Positions 21-211 (LIVILDFGSQ…VYHICDCEPT (191 aa)) constitute a Glutamine amidotransferase type-1 domain. Cys98 serves as the catalytic Nucleophile. Active-site residues include His185 and Glu187. Residues 212-410 (WTTAAFVEEA…LGLPEEIVQR (199 aa)) form the GMPS ATP-PPase domain. Position 239-245 (239-245 (SGGVDSS)) interacts with ATP.

In terms of assembly, homodimer.

The enzyme catalyses XMP + L-glutamine + ATP + H2O = GMP + L-glutamate + AMP + diphosphate + 2 H(+). It participates in purine metabolism; GMP biosynthesis; GMP from XMP (L-Gln route): step 1/1. Its function is as follows. Catalyzes the synthesis of GMP from XMP. This Thermosynechococcus vestitus (strain NIES-2133 / IAM M-273 / BP-1) protein is GMP synthase [glutamine-hydrolyzing].